The chain runs to 569 residues: Mitochondrial import receptor subunit tomm-70 (569 aa).

At 1–12 the chain is on the mitochondrial intermembrane side; that stretch reads MVETTGISDQTK. The chain crosses the membrane as a helical span at residues 13 to 32; sequence KVLIGVAAAATVAGVGYLVY. At 33–569 the chain is on the cytoplasmic side; it reads KSFGGSDLER…KRAAEMLDMY (537 aa). TPR repeat units follow at residues 44–77, 119–152, 221–254, and 510–544; these read LEEIKALGNLKFKEKQYDSALEAFTKGVEKAGPN, TKAYLRAAKALNDVGKKQDALAYLLAAFTLDSSL, DQKQYQLALEKFKKGKYEELIDLLTEENSYPPAM, and LHLLGTNGPEPMIKKENYERAMESIRNAALFAPPR.

Belongs to the Tom70 family. In terms of assembly, forms part of the preprotein translocase complex of the outer mitochondrial membrane (TOM complex). In terms of tissue distribution, expressed in body wall muscle cells, the pharynx and structures in the tail.

The protein resides in the mitochondrion outer membrane. Receptor that accelerates the import of all mitochondrial precursor proteins. This chain is Mitochondrial import receptor subunit tomm-70, found in Caenorhabditis elegans.